Reading from the N-terminus, the 238-residue chain is Purine nucleoside phosphorylase DeoD-type (238 aa).

His4 serves as a coordination point for a purine D-ribonucleoside. Phosphate contacts are provided by residues Gly20, Arg24, Arg43, and 87-90 (RVGS). Residues 179–181 (EME) and 203–204 (SD) contribute to the a purine D-ribonucleoside site. Asp204 acts as the Proton donor in catalysis.

This sequence belongs to the PNP/UDP phosphorylase family. As to quaternary structure, homohexamer; trimer of homodimers.

It catalyses the reaction a purine D-ribonucleoside + phosphate = a purine nucleobase + alpha-D-ribose 1-phosphate. The enzyme catalyses a purine 2'-deoxy-D-ribonucleoside + phosphate = a purine nucleobase + 2-deoxy-alpha-D-ribose 1-phosphate. Functionally, catalyzes the reversible phosphorolytic breakdown of the N-glycosidic bond in the beta-(deoxy)ribonucleoside molecules, with the formation of the corresponding free purine bases and pentose-1-phosphate. The chain is Purine nucleoside phosphorylase DeoD-type from Haemophilus influenzae (strain PittGG).